The sequence spans 677 residues: Elongation factor G 2 (677 aa).

The tr-type G domain maps to 8–283; sequence SRIRNIGIIA…AVVNFLPSPE (276 aa). GTP is bound by residues 17–24, 81–85, and 135–138; these read AHIDAGKT, DTPGH, and NKMD.

It belongs to the TRAFAC class translation factor GTPase superfamily. Classic translation factor GTPase family. EF-G/EF-2 subfamily.

The protein localises to the cytoplasm. Functionally, catalyzes the GTP-dependent ribosomal translocation step during translation elongation. During this step, the ribosome changes from the pre-translocational (PRE) to the post-translocational (POST) state as the newly formed A-site-bound peptidyl-tRNA and P-site-bound deacylated tRNA move to the P and E sites, respectively. Catalyzes the coordinated movement of the two tRNA molecules, the mRNA and conformational changes in the ribosome. This is Elongation factor G 2 from Syntrophus aciditrophicus (strain SB).